Consider the following 1517-residue polypeptide: DNA-directed RNA polymerase subunit beta' (1517 aa).

Residues Cys-71, Cys-73, Cys-86, and Cys-89 each coordinate Zn(2+). Asp-482, Asp-484, and Asp-486 together coordinate Mg(2+). Residues Cys-812, Cys-886, Cys-893, and Cys-896 each coordinate Zn(2+).

The protein belongs to the RNA polymerase beta' chain family. In terms of assembly, the RNAP catalytic core consists of 2 alpha, 1 beta, 1 beta' and 1 omega subunit. When a sigma factor is associated with the core the holoenzyme is formed, which can initiate transcription. Requires Mg(2+) as cofactor. Zn(2+) is required as a cofactor.

It carries out the reaction RNA(n) + a ribonucleoside 5'-triphosphate = RNA(n+1) + diphosphate. Functionally, DNA-dependent RNA polymerase catalyzes the transcription of DNA into RNA using the four ribonucleoside triphosphates as substrates. The polypeptide is DNA-directed RNA polymerase subunit beta' (Campylobacter jejuni subsp. jejuni serotype O:6 (strain 81116 / NCTC 11828)).